The following is a 588-amino-acid chain: Polyphenol oxidase II, chloroplastic (588 aa).

The segment covering 1 to 10 (MASFTTSPCT) has biased composition (polar residues). A disordered region spans residues 1–32 (MASFTTSPCTSAAPKTPKSLSSSATISSPLPK). Residues 1-50 (MASFTTSPCTSAAPKTPKSLSSSATISSPLPKPSQIHIATAKRTHHFKVS) constitute a chloroplast transit peptide. The span at 16–29 (TPKSLSSSATISSP) shows a compositional bias: low complexity. Residues 51–88 (CNAPNGDSQPKLDRRDVLLGLGGLAGAASLINNPLAFA) constitute a thylakoid transit peptide. 2 disulfides stabilise this stretch: Cys-99–Cys-116 and Cys-115–Cys-179. Residues His-178, His-199, His-208, His-330, His-334, and His-366 each contribute to the Cu cation site. Residues 182-199 (CNGGYVQTDYPDKEIQVH) constitute a cross-link (2'-(S-cysteinyl)-histidine (Cys-His)).

Belongs to the tyrosinase family. In terms of assembly, monomer. The cofactor is Cu(2+).

Its subcellular location is the plastid. The protein localises to the chloroplast thylakoid lumen. It carries out the reaction 2 catechol + O2 = 2 1,2-benzoquinone + 2 H2O. Catalyzes the oxidation of mono- and o-diphenols to o-diquinones. The polypeptide is Polyphenol oxidase II, chloroplastic (co-2) (Ipomoea batatas (Sweet potato)).